The sequence spans 282 residues: Tryptophan 2,3-dioxygenase (282 aa).

Substrate contacts are provided by residues 51-55, Y113, and R117; that span reads FIIQH. Residue H240 participates in heme binding. T254 provides a ligand contact to substrate.

Belongs to the tryptophan 2,3-dioxygenase family. In terms of assembly, homotetramer. Requires heme as cofactor.

It carries out the reaction L-tryptophan + O2 = N-formyl-L-kynurenine. The protein operates within amino-acid degradation; L-tryptophan degradation via kynurenine pathway; L-kynurenine from L-tryptophan: step 1/2. Its function is as follows. Heme-dependent dioxygenase that catalyzes the oxidative cleavage of the L-tryptophan (L-Trp) pyrrole ring and converts L-tryptophan to N-formyl-L-kynurenine. Catalyzes the oxidative cleavage of the indole moiety. The polypeptide is Tryptophan 2,3-dioxygenase (Polaromonas naphthalenivorans (strain CJ2)).